The following is an 86-amino-acid chain: Apolipoprotein C-I (86 aa).

The first 26 residues, 1–26, serve as a signal peptide directing secretion; it reads MRLFLSLPVLVVVLLMILEGPGPAQG.

This sequence belongs to the apolipoprotein C1 family.

It localises to the secreted. Its function is as follows. Inhibitor of lipoprotein binding to the low density lipoprotein (LDL) receptor, LDL receptor-related protein, and very low density lipoprotein (VLDL) receptor. Associates with high density lipoproteins (HDL) and the triacylglycerol-rich lipoproteins in the plasma and makes up about 10% of the protein of the VLDL and 2% of that of HDL. Appears to interfere directly with fatty acid uptake and is also the major plasma inhibitor of cholesteryl ester transfer protein (CETP). Binds free fatty acids and reduces their intracellular esterification. Modulates the interaction of APOE with beta-migrating VLDL and inhibits binding of beta-VLDL to the LDL receptor-related protein. This is Apolipoprotein C-I (APOC1) from Saimiri boliviensis boliviensis (Bolivian squirrel monkey).